Reading from the N-terminus, the 225-residue chain is MRVRRLVMLRHGQTEYNAGSRMQGQLDTDLSDLGREQAVAAAEVLAKRQPLLIVSSDLRRALDTAVALGDRSGQPVSIDTRLRETHLGDWQGMTHLEVDAAAPGARLAWRDDARWAPHGGESRVDVADRSLPLVHELVTQQTDWGAAGSDRPVVLVAHGGLIAALTAALLGLPVDNWPVLGGMGNASWVQLAGHTRADGDPGAFADIRWRLDVWNASAQVANDVL.

R10 provides a ligand contact to substrate. H11 functions as the Tele-phosphohistidine intermediate in the catalytic mechanism. R60 is a binding site for substrate. Residue E84 is the Proton donor/acceptor of the active site. Position 158 (H158) interacts with substrate.

This sequence belongs to the phosphoglycerate mutase family. As to quaternary structure, homodimer.

It catalyses the reaction (2R)-2-O-(alpha-D-glucopyranosyl)-3-phospho-glycerate + H2O = (2R)-2-O-(alpha-D-glucopyranosyl)-glycerate + phosphate. Its function is as follows. Involved in the biosynthesis of mycobacterial methylglucose lipopolysaccharides (MGLP). Catalyzes the dephosphorylation of glucosyl-3-phosphoglycerate (GPG) to glucosylglycerate. This is Glucosyl-3-phosphoglycerate phosphatase from Mycolicibacterium vanbaalenii (strain DSM 7251 / JCM 13017 / BCRC 16820 / KCTC 9966 / NRRL B-24157 / PYR-1) (Mycobacterium vanbaalenii).